A 49-amino-acid polypeptide reads, in one-letter code: Large ribosomal subunit protein eL40 (49 aa).

It belongs to the eukaryotic ribosomal protein eL40 family.

The polypeptide is Large ribosomal subunit protein eL40 (Natronomonas pharaonis (strain ATCC 35678 / DSM 2160 / CIP 103997 / JCM 8858 / NBRC 14720 / NCIMB 2260 / Gabara) (Halobacterium pharaonis)).